The sequence spans 388 residues: Cytochrome b (388 aa).

The next 4 membrane-spanning stretches (helical) occupy residues 32–52 (FGSLLGFCLVIQIVTGVTLAM), 76–98 (WLIRYLHSNTASAFFFLVYLHVG), 113–133 (TWTIGTIILVLMMATAFLGYV), and 179–199 (FFALHFVLPFVLAALVLMHLI). The heme b site is built by histidine 82 and histidine 96. Heme b-binding residues include histidine 183 and histidine 197. Residue histidine 202 participates in a ubiquinone binding. The next 4 helical transmembrane spans lie at 226 to 246 (FIFKDLITIFLFIIVLSIFIF), 290 to 310 (LLGVIAMFSAILIIMIMPITD), 322 to 342 (LSKITFYIFVANFLVLMQLGA), and 349 to 369 (FIEFGQISTVLYFSHFLIIVP).

Belongs to the cytochrome b family. In terms of assembly, fungal cytochrome b-c1 complex contains 10 subunits; 3 respiratory subunits, 2 core proteins and 5 low-molecular weight proteins. Cytochrome b-c1 complex is a homodimer. Requires heme b as cofactor.

The protein resides in the mitochondrion inner membrane. In terms of biological role, component of the ubiquinol-cytochrome c reductase complex (complex III or cytochrome b-c1 complex) that is part of the mitochondrial respiratory chain. The b-c1 complex mediates electron transfer from ubiquinol to cytochrome c. Contributes to the generation of a proton gradient across the mitochondrial membrane that is then used for ATP synthesis. This chain is Cytochrome b (cob), found in Zymoseptoria tritici (Speckled leaf blotch fungus).